Reading from the N-terminus, the 142-residue chain is Protein E6 (142 aa).

2 zinc fingers span residues 30–66 (CVFC…CTPC) and 103–139 (CFDC…CRNC).

Belongs to the papillomaviridae E6 protein family. As to quaternary structure, forms homodimers. Interacts with ubiquitin-protein ligase UBE3A/E6-AP; this interaction stimulates UBE3A ubiquitin activity. Interacts with host BAK1.

Its subcellular location is the host cytoplasm. The protein resides in the host nucleus. In terms of biological role, plays a major role in the induction and maintenance of cellular transformation. E6 associates with host UBE3A/E6-AP ubiquitin-protein ligase and modulates its activity. Protects host keratinocytes from apoptosis by mediating the degradation of host BAK1. May also inhibit host immune response. The chain is Protein E6 from Homo sapiens (Human).